Reading from the N-terminus, the 323-residue chain is Dehydrogenase/reductase SDR family member 7B (323 aa).

Over 1–4 the chain is Cytoplasmic; sequence MDLT. A helical; Signal-anchor for type II membrane protein transmembrane segment spans residues 5–25; sequence SWAIFPLLLASIGVYGLYKLL. The Lumenal portion of the chain corresponds to 26 to 272; sequence QKLRSGAYLQ…AVGERRKELL (247 aa). Residues Ser-46 and Leu-48 each contribute to the NAD(+) site. Ser-178 contacts substrate. NAD(+) is bound by residues Tyr-191, Lys-195, and Thr-226. Tyr-191 serves as the catalytic Proton acceptor.

This sequence belongs to the short-chain dehydrogenases/reductases (SDR) family.

The protein resides in the endoplasmic reticulum membrane. Its function is as follows. Putative oxidoreductase. This Xenopus laevis (African clawed frog) protein is Dehydrogenase/reductase SDR family member 7B (dhrs7b).